Here is a 347-residue protein sequence, read N- to C-terminus: NADH-ubiquinone oxidoreductase chain 2 (347 aa).

Helical transmembrane passes span 13–33 (IILG…WIGF), 59–79 (YFLI…INLL), 84–104 (WAVS…ALAM), 111–131 (FHFW…LILL), 149–169 (IDPT…GWGG), 178–198 (IMAY…IYNP), 201–221 (TILN…LLII), 240–260 (IAII…LTGF), 276–296 (IALS…YTRL), and 326–346 (LSPL…MSAL).

The protein belongs to the complex I subunit 2 family. As to quaternary structure, core subunit of respiratory chain NADH dehydrogenase (Complex I) which is composed of 45 different subunits. Interacts with TMEM242.

It localises to the mitochondrion inner membrane. The enzyme catalyses a ubiquinone + NADH + 5 H(+)(in) = a ubiquinol + NAD(+) + 4 H(+)(out). Core subunit of the mitochondrial membrane respiratory chain NADH dehydrogenase (Complex I) that is believed to belong to the minimal assembly required for catalysis. Complex I functions in the transfer of electrons from NADH to the respiratory chain. The immediate electron acceptor for the enzyme is believed to be ubiquinone. This is NADH-ubiquinone oxidoreductase chain 2 from Chrotopterus auritus (Peters's woolly false vampire bat).